Reading from the N-terminus, the 308-residue chain is Oxygen-dependent coproporphyrinogen-III oxidase (308 aa).

Ser100 provides a ligand contact to substrate. A divalent metal cation-binding residues include His104 and His114. His114 functions as the Proton donor in the catalytic mechanism. Position 116 to 118 (Asn116 to Arg118) interacts with substrate. His153 and His183 together coordinate a divalent metal cation. The segment at Tyr248–Lys283 is important for dimerization. Substrate is bound at residue Gly266–Arg268.

The protein belongs to the aerobic coproporphyrinogen-III oxidase family. As to quaternary structure, homodimer. It depends on a divalent metal cation as a cofactor.

The protein localises to the cytoplasm. It carries out the reaction coproporphyrinogen III + O2 + 2 H(+) = protoporphyrinogen IX + 2 CO2 + 2 H2O. Its pathway is porphyrin-containing compound metabolism; protoporphyrin-IX biosynthesis; protoporphyrinogen-IX from coproporphyrinogen-III (O2 route): step 1/1. Involved in the heme biosynthesis. Catalyzes the aerobic oxidative decarboxylation of propionate groups of rings A and B of coproporphyrinogen-III to yield the vinyl groups in protoporphyrinogen-IX. The polypeptide is Oxygen-dependent coproporphyrinogen-III oxidase (Francisella tularensis subsp. mediasiatica (strain FSC147)).